We begin with the raw amino-acid sequence, 134 residues long: Aspartate 1-decarboxylase (134 aa).

The Schiff-base intermediate with substrate; via pyruvic acid role is filled by Ser-25. Position 25 is a pyruvic acid (Ser) (Ser-25). Substrate is bound at residue Thr-57. Tyr-58 functions as the Proton donor in the catalytic mechanism. Gly-73–Ala-75 contributes to the substrate binding site.

This sequence belongs to the PanD family. Heterooctamer of four alpha and four beta subunits. The cofactor is pyruvate. Post-translationally, is synthesized initially as an inactive proenzyme, which is activated by self-cleavage at a specific serine bond to produce a beta-subunit with a hydroxyl group at its C-terminus and an alpha-subunit with a pyruvoyl group at its N-terminus.

The protein resides in the cytoplasm. It catalyses the reaction L-aspartate + H(+) = beta-alanine + CO2. Its pathway is cofactor biosynthesis; (R)-pantothenate biosynthesis; beta-alanine from L-aspartate: step 1/1. Functionally, catalyzes the pyruvoyl-dependent decarboxylation of aspartate to produce beta-alanine. In Citrifermentans bemidjiense (strain ATCC BAA-1014 / DSM 16622 / JCM 12645 / Bem) (Geobacter bemidjiensis), this protein is Aspartate 1-decarboxylase.